Consider the following 254-residue polypeptide: Glutathione S-transferase F14 (254 aa).

In terms of domain architecture, GST N-terminal spans 4–85; it reads SKMKLHCGFI…YLAEQYKDVG (82 aa). Residues 42 to 43, 56 to 57, and 69 to 70 contribute to the glutathione site; these read AK, EV, and EP. A GST C-terminal domain is found at 92-231; that stretch reads DPKKRAIMSM…DLMKQRRLPI (140 aa).

The protein belongs to the GST superfamily. Phi family.

It localises to the cytoplasm. The protein localises to the cytosol. It carries out the reaction RX + glutathione = an S-substituted glutathione + a halide anion + H(+). May be involved in the conjugation of reduced glutathione to a wide number of exogenous and endogenous hydrophobic electrophiles and have a detoxification role against certain herbicides. This chain is Glutathione S-transferase F14, found in Arabidopsis thaliana (Mouse-ear cress).